Consider the following 195-residue polypeptide: Probable nicotinate-nucleotide adenylyltransferase (195 aa).

The protein belongs to the NadD family.

It carries out the reaction nicotinate beta-D-ribonucleotide + ATP + H(+) = deamido-NAD(+) + diphosphate. Its pathway is cofactor biosynthesis; NAD(+) biosynthesis; deamido-NAD(+) from nicotinate D-ribonucleotide: step 1/1. In terms of biological role, catalyzes the reversible adenylation of nicotinate mononucleotide (NaMN) to nicotinic acid adenine dinucleotide (NaAD). This chain is Probable nicotinate-nucleotide adenylyltransferase, found in Chlorobaculum tepidum (strain ATCC 49652 / DSM 12025 / NBRC 103806 / TLS) (Chlorobium tepidum).